The chain runs to 89 residues: Acyl carrier protein MbtL (89 aa).

The Carrier domain maps to 8 to 83; that stretch reads NHVSAELLGI…DLQAAIAAEP (76 aa). An O-(pantetheine 4'-phosphoryl)serine modification is found at S43.

In terms of processing, 4'-phosphopantetheine is transferred from CoA to a specific serine of apo-ACP, leading to the activated holo-ACP form.

The protein localises to the cytoplasm. The protein operates within siderophore biosynthesis; mycobactin biosynthesis. Its function is as follows. Acyl carrier protein involved in the formation of acyl-S-ACP intermediates within the mycobactin biosynthesis process. In Mycolicibacterium paratuberculosis (strain ATCC BAA-968 / K-10) (Mycobacterium paratuberculosis), this protein is Acyl carrier protein MbtL (mbtL).